We begin with the raw amino-acid sequence, 301 residues long: MKLDYNSREIFFGNEALIVADMSKGINGKPEFTNHKIVAGLVSVGSMEDQAETNSYPADDVPDHGVKKGATLLQGEMVFIQTDQALKEDILGQQRTENGLGWSPTGNWKTKCVQYLIKGRKRDKVTGEFVDGYRVVVYPNLTPTAEATKESETDSVDGVDPIQWTLAVQATESDIYLNGGKKVPAIEYEIWGEQAKDFVKKMESGLFIMQPDTVLAGAITLVAPVIPNVTTATKGNNDGTIVVPDTLKDSKGGTVKVTSVIKDAHGKVATNGQLAPGVYIVTFSADGYEDVTAGVSVTDHS.

Belongs to the skunalikevirus tail tube protein family. As to quaternary structure, homohexamer. The tube is composed of 31 hexameric rings.

The protein localises to the virion. In terms of biological role, forms the cylindrical rigid tail tube. In Lactococcus phage F4-1 (Lactococcus lactis bacteriophage F4-1), this protein is Tail tube protein.